Consider the following 331-residue polypeptide: Ornithine lipid hydroxylase OlsE (331 aa).

Helical transmembrane passes span 13–33 (VSSL…YFAF), 37–57 (MHLL…ALFE), 85–105 (GGVQ…ATVA), 120–140 (WPMA…LYMA), and 189–209 (LLGA…FIGL). The Fatty acid hydroxylase domain maps to 126–260 (VVLGLVIAEF…LVIWDQLLGT (135 aa)).

Belongs to the sterol desaturase family.

It is found in the cell inner membrane. Its pathway is lipid metabolism. Involved in the biosynthesis of ornithine lipids (OLs), which are phosphorus-free membrane lipids. Is responsible for the hydroxylation of OL within the ornithine moiety. This is Ornithine lipid hydroxylase OlsE from Rhizobium tropici.